We begin with the raw amino-acid sequence, 371 residues long: tRNA-specific 2-thiouridylase MnmA (371 aa).

ATP is bound by residues 16 to 23 (GMSGGVDS) and Met42. The tract at residues 102–104 (NPD) is interaction with target base in tRNA. Residue Cys107 is the Nucleophile of the active site. An intrachain disulfide couples Cys107 to Cys204. Gly132 lines the ATP pocket. Residues 154 to 156 (KDQ) form an interaction with tRNA region. Residue Cys204 is the Cysteine persulfide intermediate of the active site. Positions 316 to 317 (RY) are interaction with tRNA.

This sequence belongs to the MnmA/TRMU family.

It is found in the cytoplasm. It carries out the reaction S-sulfanyl-L-cysteinyl-[protein] + uridine(34) in tRNA + AH2 + ATP = 2-thiouridine(34) in tRNA + L-cysteinyl-[protein] + A + AMP + diphosphate + H(+). Its function is as follows. Catalyzes the 2-thiolation of uridine at the wobble position (U34) of tRNA, leading to the formation of s(2)U34. The polypeptide is tRNA-specific 2-thiouridylase MnmA (Shewanella piezotolerans (strain WP3 / JCM 13877)).